Here is a 113-residue protein sequence, read N- to C-terminus: Large ribosomal subunit protein bL17 (113 aa).

It belongs to the bacterial ribosomal protein bL17 family. In terms of assembly, part of the 50S ribosomal subunit. Contacts protein L32.

The protein is Large ribosomal subunit protein bL17 of Clostridioides difficile (strain 630) (Peptoclostridium difficile).